The following is a 568-amino-acid chain: MNLSADQAPVTAVDELAPPSQPHRLSTSCDLHPEERFSGFCPSCLCDRLSVLDHNAAPPPSSSSRKPPSISAVSLKALFKPSSSGTNNSNGNGRVRPGFFPELRRTKSFSAKNNEGFSGGFEPQRRSCDVRLRDDERNLPINEAASVDKIEEEARESSVSEIVLEVTEEAEIEEDEENGEKDPGEIVEEKSSEIGEEEEELKPMKDYMDLYSQTKKPSVKDFAGSFFSAASVFSKKLQKWKQKQKVKKPRNGVGGGRPQSEIGVGRRSSDTDPRFSLDAGRFSVDIGRISMDDSRYSLDEPRASWDGHLIGRTTAARVPLPPSMLSVVENAPLNRSDMQIPSSPSIKPISGDSDPIIIIPGGSNQTRDYYTGPPSSRRRKSLDRSNSIRKIVTELEDVKSVSNSTTTIDSNSMETAENKGNQNGDKKSRRWGKWSILGFIYRKGKDDEEEDRYSRSNSAGMVERSLSESWPEMRNGEGGGPKMRRSNSNVSWRSSGGGSARNKSSRYSSKDGENGMLRFYLTPMRRSWKTSGGSGGGGGGGGGGGWEKTAAKANSHGHSIARRVMRLY.

Disordered stretches follow at residues M1 to T27, L78 to F99, E168 to P203, Q242 to S276, P360 to S428, D446 to G512, and R526 to H558. Residues S82–G93 are compositionally biased toward low complexity. Residues E168–G179 are compositionally biased toward acidic residues. Residues E180 to E193 show a composition bias toward basic and acidic residues. Position 260 is a phosphoserine (S260). Residues S400–N423 show a composition bias toward polar residues. The segment covering G532–W546 has biased composition (gly residues).

This sequence belongs to the OCTOPUS family. In terms of processing, phosphorylation at Ser-260 amplifies the promotion of protophloem differentiation.

The protein localises to the cell membrane. It is found in the cytoplasm. Functionally, potentiates primary root protophloem differentiation. Regulates roots architecture. In Arabidopsis thaliana (Mouse-ear cress), this protein is Protein OCTOPUS-like.